Consider the following 461-residue polypeptide: MVEFRFDIKPLFAQPIIKVTSNLLPNTFRGDRRQCLDATSKMTEIIDQLGQLSATSQGLSKPVTTAQRLRMSDNQTIYLLADNEAGHNGAVLGLLKVGTKNLYLFDEAGKTRMVEQTPSILDFYVHESRQRAGLGKRLFQTMLNEEQWTARKCSVDRPSEKLLSFLSKHYGLKRIIPQANNFVLYEGFFNDGESGNGGGNGHANGTPNGLHITNSPNTHLFGATYLGEDSNQRRGSQQQTTPNARLQQITQISPSGRYGAKRPTCSMAEIIHAGNSKGGNGNGSAEANSGNGNHDIPEIAEQLQRQSLADLEANSYEPEPEVEPEPEPEPEPEPEPEVITPPSPPPKSHTPTPPSVRSPEVAESIVGDNRRAPAFQLSKQHTGMKNRSFGVGMAVMPSSKMEFDQMEREDFGVVKINRPPGHEVTSPGQDNTDAMSTVSSGGGGLTDQGYYDLKFYHNKLW.

One can recognise an N-acetyltransferase domain in the interval 2–189; that stretch reads VEFRFDIKPL…NNFVLYEGFF (188 aa). Acetyl-CoA is bound by residues 123 to 136 and 159 to 168; these read FYVH…GLGK and SEKLLSFLSK. Disordered stretches follow at residues 196 to 295, 314 to 362, and 418 to 443; these read NGGG…GNHD, NSYE…PEVA, and RPPG…SGGG. A compositionally biased stretch (polar residues) spans 233-254; it reads RRGSQQQTTPNARLQQITQISP. A compositionally biased stretch (low complexity) spans 283–293; sequence GSAEANSGNGN. Over residues 318-336 the composition is skewed to acidic residues; it reads PEPEVEPEPEPEPEPEPEP. Residues 339–356 are compositionally biased toward pro residues; that stretch reads ITPPSPPPKSHTPTPPSV. Over residues 426–439 the composition is skewed to polar residues; sequence SPGQDNTDAMSTVS.

The protein belongs to the acetyltransferase ATAT1 family.

The enzyme catalyses L-lysyl-[alpha-tubulin] + acetyl-CoA = N(6)-acetyl-L-lysyl-[alpha-tubulin] + CoA + H(+). Functionally, specifically acetylates 'Lys-40' in alpha-tubulin on the lumenal side of microtubules. Promotes microtubule destabilization and accelerates microtubule dynamics; this activity may be independent of acetylation activity. Acetylates alpha-tubulin with a slow enzymatic rate, due to a catalytic site that is not optimized for acetyl transfer. Enters the microtubule through each end and diffuses quickly throughout the lumen of microtubules. Acetylates only long/old microtubules because of its slow acetylation rate since it does not have time to act on dynamically unstable microtubules before the enzyme is released. Acetylates central spindle microtubules. The polypeptide is Alpha-tubulin N-acetyltransferase 1 (Drosophila melanogaster (Fruit fly)).